Consider the following 720-residue polypeptide: Neurochondrin (720 aa).

Belongs to the neurochondrin family.

It is found in the cytoplasm. It localises to the cytosol. The protein resides in the cell projection. The protein localises to the dendrite. Its subcellular location is the postsynapse. Its function is as follows. Probably involved in signal transduction, in the nervous system. Required for the spatial learning process. May also be involved in neurite outgrowth. This Xenopus laevis (African clawed frog) protein is Neurochondrin (ncdn).